The sequence spans 191 residues: uncharacterized protein (191 aa).

This is an uncharacterized protein from Treponema pallidum (strain Nichols).